The primary structure comprises 410 residues: LIMR family protein SELMODRAFT_432208 (410 aa).

5 helical membrane passes run 30 to 50 (LWWA…IFFY), 67 to 87 (LWVV…YAVI), 129 to 149 (VTLM…LTTL), 156 to 176 (ICLD…NTII), and 179 to 199 (ILFM…LIFA). The stretch at 245 to 274 (RMFRKNVKKVQQELVFLEDDVEALNEAFPQ) forms a coiled coil. The next 2 membrane-spanning stretches (helical) occupy residues 288–308 (LVFG…IIVF) and 330–350 (GGLL…MSVI). Positions 389–400 (PSSAMDSSSWSA) are enriched in low complexity. The segment at 389 to 410 (PSSAMDSSSWSADRPCRPWPWP) is disordered.

The protein belongs to the LIMR family.

The protein resides in the membrane. The sequence is that of LIMR family protein SELMODRAFT_432208 from Selaginella moellendorffii (Spikemoss).